Consider the following 316-residue polypeptide: Pantothenate kinase (316 aa).

95–102 (GSVAVGKS) lines the ATP pocket.

The protein belongs to the prokaryotic pantothenate kinase family.

The protein resides in the cytoplasm. The enzyme catalyses (R)-pantothenate + ATP = (R)-4'-phosphopantothenate + ADP + H(+). Its pathway is cofactor biosynthesis; coenzyme A biosynthesis; CoA from (R)-pantothenate: step 1/5. The sequence is that of Pantothenate kinase from Klebsiella pneumoniae subsp. pneumoniae (strain ATCC 700721 / MGH 78578).